The primary structure comprises 636 residues: Chaperone protein HtpG (636 aa).

An a; substrate-binding region spans residues 1 to 344 (MTMSVETQKE…SNDLSLNVSR (344 aa)). The tract at residues 345–561 (EILQKDPIID…EQDLGMQMRQ (217 aa)) is b. Positions 562 to 636 (ILEASGQKVP…LNKLLVELSV (75 aa)) are c.

It belongs to the heat shock protein 90 family. Homodimer.

The protein resides in the cytoplasm. Molecular chaperone. Has ATPase activity. The protein is Chaperone protein HtpG of Pseudomonas fluorescens (strain SBW25).